The primary structure comprises 761 residues: Zinc finger protein 287 (761 aa).

The SCAN box domain maps to 49-131 (RQNFRNFPYP…TLVEDLTQIL (83 aa)). Residues 134-154 (EAPQNSTLSQDTPEEDPRGKH) are disordered. Residues 170–238 (MTFKDVAVDI…IKEILEGPSP (69 aa)) form the KRAB domain. 14 consecutive C2H2-type zinc fingers follow at residues 368 to 390 (YKCNVCGKKFRKYPSLLKHQSTH), 396 to 418 (YECEECGKEFRHISSLIAHQRMH), 424 to 446 (YECHQCGKAFSQRAHLTIHQRIH), 452 to 474 (YKCDDCGKDFSQRAHLTIHQRTH), 480 to 502 (YKCLECGKTFSHSSSLINHQRVH), 508 to 530 (YICNECGKTFSQSTHLLQHQKIH), 536 to 558 (YKCNECWKVFSQSTYLIRHQRIH), 564 to 586 (YKCNECGKAFAHSSTLIQHQTTH), 592 to 614 (YICNICGKAFSQSANLTQHHRTH), 620 to 642 (YKCSVCGKAFSQSVHLTQHQRIH), 648 to 670 (FKCNICGKAYRQGANLTQHQRIH), 676 to 698 (YKCNECGKAFIYSSSLNQHQRTH), 704 to 726 (YKCNECDKDFSQRTCLIQHQRIH), and 732 to 754 (YACRICGKTFTQSTNLIQHQRVH).

Belongs to the krueppel C2H2-type zinc-finger protein family.

It localises to the nucleus. Functionally, may be involved in transcriptional regulation. This is Zinc finger protein 287 from Pongo pygmaeus (Bornean orangutan).